We begin with the raw amino-acid sequence, 144 residues long: EF-hand calcium-binding domain-containing protein 8 (144 aa).

EF-hand domains are found at residues 52-86 and 87-122; these read IHLA…VLSS and VSDE…EFQG.

The protein is EF-hand calcium-binding domain-containing protein 8 (EFCAB8) of Homo sapiens (Human).